The chain runs to 155 residues: dCTP deaminase (155 aa).

DCTP contacts are provided by residues 79 to 84 (RSSLAR), aspartate 95, glutamine 124, and tyrosine 138.

The protein belongs to the dCTP deaminase family. In terms of assembly, homotrimer.

The catalysed reaction is dCTP + H2O + H(+) = dUTP + NH4(+). It functions in the pathway pyrimidine metabolism; dUMP biosynthesis; dUMP from dCTP (dUTP route): step 1/2. In terms of biological role, catalyzes the deamination of dCTP to dUTP. The sequence is that of dCTP deaminase from Thermococcus kodakarensis (strain ATCC BAA-918 / JCM 12380 / KOD1) (Pyrococcus kodakaraensis (strain KOD1)).